The sequence spans 554 residues: Phenylalanine--tRNA ligase beta subunit (554 aa).

A B5 domain is found at 276-351; the sequence is LTPKSRMISV…INYGYEKFEG (76 aa). Mg(2+) contacts are provided by aspartate 329, aspartate 335, glutamate 338, and glutamate 339.

The protein belongs to the phenylalanyl-tRNA synthetase beta subunit family. Type 2 subfamily. As to quaternary structure, tetramer of two alpha and two beta subunits. Mg(2+) is required as a cofactor.

The protein resides in the cytoplasm. The catalysed reaction is tRNA(Phe) + L-phenylalanine + ATP = L-phenylalanyl-tRNA(Phe) + AMP + diphosphate + H(+). This chain is Phenylalanine--tRNA ligase beta subunit, found in Methanococcus maripaludis (strain C6 / ATCC BAA-1332).